The sequence spans 417 residues: mRNA export factor ICP27 homolog (417 aa).

Over residues 1 to 28 (MEDIIEGGISSDDDFDSSDSSSDEEESD) the composition is skewed to acidic residues. The disordered stretch occupies residues 1–143 (MEDIIEGGIS…NGPLRNGPPR (143 aa)). The segment at 64–120 (RQRSPITWEHQSPLSRVYRSPSPMRFGKRPRISSNSTSRSCKTSWADRVREAAAQRR) is interaction with RNA. The Nuclear localization signal signature appears at 88–94 (RFGKRPR). Over residues 96–107 (SSNSTSRSCKTS) the composition is skewed to low complexity. An interaction with host ALYREF or mouse ALYREF2 region spans residues 106–120 (TSWADRVREAAAQRR). A compositionally biased stretch (basic and acidic residues) spans 108–117 (WADRVREAAA). Residues 118–127 (QRRPSRPFRK) carry the Nuclear localization signal motif. The span at 120 to 130 (RPSRPFRKPYS) shows a compositional bias: basic residues. Low complexity predominate over residues 132 to 141 (PRNGPLRNGP). Zn(2+) is bound by residues C295, H385, C389, and C394. A CHC2-type zinc finger spans residues 295 to 394 (CLMQTTPQDH…HLNKCPSSTC (100 aa)).

The protein belongs to the HHV-1 ICP27 protein family. As to quaternary structure, homodimer. Homodimerization is required for transactivation. Interacts with host ALYREF and with mouse ALYREF2. Associates in a complex with RNA, and host export factors NXF1/TAP and ALYREF or ALYREF2; these interactions allow nuclear export of viral transcripts.

The protein localises to the host cytoplasm. It localises to the host nucleus. In terms of biological role, probably acts as a viral splicing factor that regulates viral RNA splicing. Functions as a multifunctional regulator of the expression of viral lytic genes. Early protein that promotes the accumulation and nuclear export of viral intronless RNA transcripts by interacting with mRNAs and cellular export proteins. The protein is mRNA export factor ICP27 homolog (EJRF1) of Saimiriine herpesvirus 2 (strain 11) (SaHV-2).